A 370-amino-acid chain; its full sequence is Putative F-box protein At1g47390 (370 aa).

The region spanning 1–47 (MAPEEKLPCELIEEILSRVPPESLVRFRTVSKKWNALFDDKMFINNH) is the F-box domain.

In Arabidopsis thaliana (Mouse-ear cress), this protein is Putative F-box protein At1g47390.